A 430-amino-acid polypeptide reads, in one-letter code: Tol-Pal system protein TolB (430 aa).

An N-terminal signal peptide occupies residues 1-21; sequence MKQAFRVALGFLILWASVLHA.

The protein belongs to the TolB family. In terms of assembly, the Tol-Pal system is composed of five core proteins: the inner membrane proteins TolA, TolQ and TolR, the periplasmic protein TolB and the outer membrane protein Pal. They form a network linking the inner and outer membranes and the peptidoglycan layer.

It is found in the periplasm. Its function is as follows. Part of the Tol-Pal system, which plays a role in outer membrane invagination during cell division and is important for maintaining outer membrane integrity. TolB occupies a key intermediary position in the Tol-Pal system because it communicates directly with both membrane-embedded components, Pal in the outer membrane and TolA in the inner membrane. The chain is Tol-Pal system protein TolB from Serratia proteamaculans (strain 568).